Consider the following 116-residue polypeptide: UPF0102 protein IL0423 (116 aa).

It belongs to the UPF0102 family.

This is UPF0102 protein IL0423 from Idiomarina loihiensis (strain ATCC BAA-735 / DSM 15497 / L2-TR).